Reading from the N-terminus, the 155-residue chain is Small ribosomal subunit protein bS6 (155 aa).

The tract at residues 94–155 is disordered; the sequence is VKQEGPLPTP…TPELEEQVKS (62 aa). The span at 103–112 shows a compositional bias: polar residues; that stretch reads PRSSNKSSNQ. Residues 113–141 are compositionally biased toward basic and acidic residues; it reads AEKKENENIDSANKSEPKADETDNKKKIT.

It belongs to the bacterial ribosomal protein bS6 family.

Functionally, binds together with bS18 to 16S ribosomal RNA. The protein is Small ribosomal subunit protein bS6 of Prochlorococcus marinus (strain MIT 9515).